The sequence spans 360 residues: Histidinol-phosphate aminotransferase (360 aa).

At lysine 218 the chain carries N6-(pyridoxal phosphate)lysine.

The protein belongs to the class-II pyridoxal-phosphate-dependent aminotransferase family. Histidinol-phosphate aminotransferase subfamily. As to quaternary structure, homodimer. Requires pyridoxal 5'-phosphate as cofactor.

It carries out the reaction L-histidinol phosphate + 2-oxoglutarate = 3-(imidazol-4-yl)-2-oxopropyl phosphate + L-glutamate. The protein operates within amino-acid biosynthesis; L-histidine biosynthesis; L-histidine from 5-phospho-alpha-D-ribose 1-diphosphate: step 7/9. This Chlorobium phaeobacteroides (strain DSM 266 / SMG 266 / 2430) protein is Histidinol-phosphate aminotransferase.